The chain runs to 188 residues: Ribose 1,5-bisphosphate phosphokinase PhnN (188 aa).

9–16 (GPSGAGKD) lines the ATP pocket.

This sequence belongs to the ribose 1,5-bisphosphokinase family.

It carries out the reaction alpha-D-ribose 1,5-bisphosphate + ATP = 5-phospho-alpha-D-ribose 1-diphosphate + ADP. It participates in metabolic intermediate biosynthesis; 5-phospho-alpha-D-ribose 1-diphosphate biosynthesis; 5-phospho-alpha-D-ribose 1-diphosphate from D-ribose 5-phosphate (route II): step 3/3. Catalyzes the phosphorylation of ribose 1,5-bisphosphate to 5-phospho-D-ribosyl alpha-1-diphosphate (PRPP). The chain is Ribose 1,5-bisphosphate phosphokinase PhnN from Pectobacterium atrosepticum (strain SCRI 1043 / ATCC BAA-672) (Erwinia carotovora subsp. atroseptica).